The chain runs to 420 residues: Transmembrane protease serine 11B-like protein (420 aa).

At 1–19 (MTVSKLRPVIASRKSFPPW) the chain is on the cytoplasmic side. A helical; Signal-anchor for type II membrane protein membrane pass occupies residues 20-40 (MIILGVLGVLAILGLIIGLLV). Topologically, residues 41–420 (HFLAVENKIY…RDWIASKTGI (380 aa)) are extracellular. Residues 48–165 (KIYYYQGSFK…GSLKLTEITK (118 aa)) enclose the SEA domain. N-linked (GlcNAc...) asparagine glycosylation is found at N111 and N146. The Peptidase S1 domain occupies 189–419 (ITGGSTAQKG…YRDWIASKTG (231 aa)). A disulfide bridge connects residues C214 and C230. H229 acts as the Charge relay system in catalysis. A glycan (N-linked (GlcNAc...) asparagine) is linked at N239. The active-site Charge relay system is D274. Cystine bridges form between C339–C355 and C366–C395. Residue S370 is the Charge relay system of the active site.

Belongs to the peptidase S1 family.

It localises to the membrane. The protein localises to the cell membrane. Inhibited by aprotinin, leupeptin, benzamidine, SERPINA1, SPINT1 and SPINT2. Serine protease. The chain is Transmembrane protease serine 11B-like protein (Tmprss11bnl) from Rattus norvegicus (Rat).